A 312-amino-acid chain; its full sequence is MKAGNFSDTPEFFLLGLSGDPELQPILFMLFLSMYLATMLGNLLIILAVNSDSHLHTPMYFLLSILSLVDICFTSTTMPKMLVNIQAQAQSINYTGCLTQICFVLVFVGLENGILVMMAYDRFVAICHPLRYNVIMNPKLCGLLLLLSFIVSVLDALLHTLMVLQLTFCIDLEIPHFFCELAHILKLACSDVLINNILVYLVTSLLGVVPLSGIIFSYTRIVSSVMKIPSAGGKYKAFSICGSHLIVVSLFYGTGFGVYLSSGATHSSRKGAIASVMYTVVTPMLNPLIYSLRNKDMLKALRKLISRIPSFH.

Residues 1 to 25 are Extracellular-facing; sequence MKAGNFSDTPEFFLLGLSGDPELQP. N-linked (GlcNAc...) asparagine glycosylation is present at Asn5. The helical transmembrane segment at 26 to 46 threads the bilayer; that stretch reads ILFMLFLSMYLATMLGNLLII. Residues 47–54 are Cytoplasmic-facing; it reads LAVNSDSH. A helical transmembrane segment spans residues 55–75; sequence LHTPMYFLLSILSLVDICFTS. At 76–99 the chain is on the extracellular side; that stretch reads TTMPKMLVNIQAQAQSINYTGCLT. N-linked (GlcNAc...) asparagine glycosylation occurs at Asn93. A disulfide bridge connects residues Cys97 and Cys189. Residues 100–120 traverse the membrane as a helical segment; it reads QICFVLVFVGLENGILVMMAY. The Cytoplasmic segment spans residues 121–139; it reads DRFVAICHPLRYNVIMNPK. The chain crosses the membrane as a helical span at residues 140–160; that stretch reads LCGLLLLLSFIVSVLDALLHT. The Extracellular segment spans residues 161–197; that stretch reads LMVLQLTFCIDLEIPHFFCELAHILKLACSDVLINNI. A helical transmembrane segment spans residues 198-217; that stretch reads LVYLVTSLLGVVPLSGIIFS. Topologically, residues 218–237 are cytoplasmic; that stretch reads YTRIVSSVMKIPSAGGKYKA. Residues 238–258 form a helical membrane-spanning segment; sequence FSICGSHLIVVSLFYGTGFGV. Topologically, residues 259–271 are extracellular; that stretch reads YLSSGATHSSRKG. The helical transmembrane segment at 272–292 threads the bilayer; sequence AIASVMYTVVTPMLNPLIYSL. The Cytoplasmic segment spans residues 293 to 312; that stretch reads RNKDMLKALRKLISRIPSFH.

This sequence belongs to the G-protein coupled receptor 1 family.

The protein resides in the cell membrane. Odorant receptor. The polypeptide is Olfactory receptor 7G3 (OR7G3) (Homo sapiens (Human)).